Reading from the N-terminus, the 369-residue chain is Porin-like protein BUsg_347 (369 aa).

A signal peptide spans 1-23; the sequence is MKNHKSLAILIPMLFAGSTAVNA.

The protein belongs to the Gram-negative porin family. As to quaternary structure, homotrimer.

The protein resides in the cell outer membrane. Its function is as follows. Forms pores that allow passive diffusion of small molecules across the membrane. The chain is Porin-like protein BUsg_347 from Buchnera aphidicola subsp. Schizaphis graminum (strain Sg).